The following is a 644-amino-acid chain: Exoribonuclease 2 (644 aa).

In terms of domain architecture, RNB spans 189-516 (REDLTALDFV…NHRLLKAVIK (328 aa)). One can recognise an S1 motif domain in the interval 561-643 (DTRFAAEIVD…ETRSIIARPV (83 aa)).

The protein belongs to the RNR ribonuclease family. RNase II subfamily.

Its subcellular location is the cytoplasm. It catalyses the reaction Exonucleolytic cleavage in the 3'- to 5'-direction to yield nucleoside 5'-phosphates.. Functionally, involved in mRNA degradation. Hydrolyzes single-stranded polyribonucleotides processively in the 3' to 5' direction. This is Exoribonuclease 2 from Escherichia coli O45:K1 (strain S88 / ExPEC).